The chain runs to 255 residues: Large ribosomal subunit protein uL4 (255 aa).

Belongs to the universal ribosomal protein uL4 family. As to quaternary structure, part of the 50S ribosomal subunit.

One of the primary rRNA binding proteins, this protein initially binds near the 5'-end of the 23S rRNA. It is important during the early stages of 50S assembly. It makes multiple contacts with different domains of the 23S rRNA in the assembled 50S subunit and ribosome. Its function is as follows. Forms part of the polypeptide exit tunnel. The protein is Large ribosomal subunit protein uL4 of Thermoplasma volcanium (strain ATCC 51530 / DSM 4299 / JCM 9571 / NBRC 15438 / GSS1).